A 373-amino-acid chain; its full sequence is Flagellar P-ring protein (373 aa).

Positions 1-26 (MKLFFRFVTLVAVLAMSLANVAPAWA) are cleaved as a signal peptide.

This sequence belongs to the FlgI family. As to quaternary structure, the basal body constitutes a major portion of the flagellar organelle and consists of four rings (L,P,S, and M) mounted on a central rod.

The protein resides in the periplasm. It is found in the bacterial flagellum basal body. Assembles around the rod to form the L-ring and probably protects the motor/basal body from shearing forces during rotation. The polypeptide is Flagellar P-ring protein (Rhizobium johnstonii (strain DSM 114642 / LMG 32736 / 3841) (Rhizobium leguminosarum bv. viciae)).